The following is a 261-amino-acid chain: Polyamine aminopropyltransferase (261 aa).

The PABS domain occupies 1 to 219 (MHPFRRRVRP…AVMAFRQSPS (219 aa)). S-methyl-5'-thioadenosine-binding positions include Asp-96 and 124-125 (DG). Asp-142 functions as the Proton acceptor in the catalytic mechanism.

It belongs to the spermidine/spermine synthase family. Homodimer or homotetramer.

It is found in the cytoplasm. The enzyme catalyses S-adenosyl 3-(methylsulfanyl)propylamine + putrescine = S-methyl-5'-thioadenosine + spermidine + H(+). Its pathway is amine and polyamine biosynthesis; spermidine biosynthesis; spermidine from putrescine: step 1/1. Functionally, catalyzes the irreversible transfer of a propylamine group from the amino donor S-adenosylmethioninamine (decarboxy-AdoMet) to putrescine (1,4-diaminobutane) to yield spermidine. The protein is Polyamine aminopropyltransferase of Chromobacterium violaceum (strain ATCC 12472 / DSM 30191 / JCM 1249 / CCUG 213 / NBRC 12614 / NCIMB 9131 / NCTC 9757 / MK).